Here is a 226-residue protein sequence, read N- to C-terminus: Putative ABC transporter ATP-binding protein DR_2469 (226 aa).

In terms of domain architecture, ABC transporter spans 2–225; that stretch reads IELRHVSHHY…LRVYRERMTW (224 aa). 33 to 40 is an ATP binding site; sequence GSNGSGKS.

The protein belongs to the ABC transporter superfamily.

The protein resides in the cell membrane. Functionally, probably part of an ABC transporter complex. Responsible for energy coupling to the transport system. The sequence is that of Putative ABC transporter ATP-binding protein DR_2469 from Deinococcus radiodurans (strain ATCC 13939 / DSM 20539 / JCM 16871 / CCUG 27074 / LMG 4051 / NBRC 15346 / NCIMB 9279 / VKM B-1422 / R1).